Consider the following 197-residue polypeptide: Imidazoleglycerol-phosphate dehydratase (197 aa).

Belongs to the imidazoleglycerol-phosphate dehydratase family.

It localises to the cytoplasm. It catalyses the reaction D-erythro-1-(imidazol-4-yl)glycerol 3-phosphate = 3-(imidazol-4-yl)-2-oxopropyl phosphate + H2O. It functions in the pathway amino-acid biosynthesis; L-histidine biosynthesis; L-histidine from 5-phospho-alpha-D-ribose 1-diphosphate: step 6/9. The chain is Imidazoleglycerol-phosphate dehydratase from Syntrophus aciditrophicus (strain SB).